Consider the following 375-residue polypeptide: Queuine tRNA-ribosyltransferase (375 aa).

The active-site Proton acceptor is D89. Substrate-binding positions include 89–93 (DSGGF), D143, Q187, and G214. The tract at residues 245 to 251 (GVGKPED) is RNA binding. Residue D264 is the Nucleophile of the active site. The tract at residues 269–273 (TRNAR) is RNA binding; important for wobble base 34 recognition. C302, C304, C307, and H333 together coordinate Zn(2+).

Belongs to the queuine tRNA-ribosyltransferase family. Homodimer. Within each dimer, one monomer is responsible for RNA recognition and catalysis, while the other monomer binds to the replacement base PreQ1. Zn(2+) is required as a cofactor.

It carries out the reaction 7-aminomethyl-7-carbaguanine + guanosine(34) in tRNA = 7-aminomethyl-7-carbaguanosine(34) in tRNA + guanine. Its pathway is tRNA modification; tRNA-queuosine biosynthesis. Catalyzes the base-exchange of a guanine (G) residue with the queuine precursor 7-aminomethyl-7-deazaguanine (PreQ1) at position 34 (anticodon wobble position) in tRNAs with GU(N) anticodons (tRNA-Asp, -Asn, -His and -Tyr). Catalysis occurs through a double-displacement mechanism. The nucleophile active site attacks the C1' of nucleotide 34 to detach the guanine base from the RNA, forming a covalent enzyme-RNA intermediate. The proton acceptor active site deprotonates the incoming PreQ1, allowing a nucleophilic attack on the C1' of the ribose to form the product. After dissociation, two additional enzymatic reactions on the tRNA convert PreQ1 to queuine (Q), resulting in the hypermodified nucleoside queuosine (7-(((4,5-cis-dihydroxy-2-cyclopenten-1-yl)amino)methyl)-7-deazaguanosine). The protein is Queuine tRNA-ribosyltransferase of Klebsiella pneumoniae subsp. pneumoniae (strain ATCC 700721 / MGH 78578).